The sequence spans 148 residues: Glyoxalase domain-containing protein 5 (148 aa).

The 121-residue stretch at 25–145 (RLDHIVMTVK…DRNLLEVSSY (121 aa)) folds into the VOC domain.

The protein belongs to the glyoxalase I family.

This Mus musculus (Mouse) protein is Glyoxalase domain-containing protein 5 (Glod5).